Consider the following 560-residue polypeptide: Solute carrier family 22 member 6 (560 aa).

The Cytoplasmic portion of the chain corresponds to 1-15; it reads MAFSDLLEQVGSTGR. Residues 16-36 form a helical membrane-spanning segment; that stretch reads FQVLHVTLLSMPILMMASHNL. Residues 37–143 lie on the Extracellular side of the membrane; that stretch reads LQNFVAAVPP…LVCDYRALKQ (107 aa). A helical membrane pass occupies residues 144-164; the sequence is MSQTTYMGGVLVGAIVFGGLS. The Cytoplasmic portion of the chain corresponds to 165–170; that stretch reads DRFGRR. Residues 171–191 form a helical membrane-spanning segment; the sequence is VLLLISNLMMAIGGTCVAFST. The Extracellular segment spans residues 192 to 201; that stretch reads SFTMFCVFRV. Residues 202 to 222 traverse the membrane as a helical segment; it reads CCGMALSGLVLNSFSLIVEWI. Residues 223–228 lie on the Cytoplasmic side of the membrane; the sequence is PTRVRT. A helical membrane pass occupies residues 229–249; it reads VVGTGTGYCYTTGQLILAAVA. The Extracellular segment spans residues 250–256; it reads YCIRDWR. Residues 257-277 form a helical membrane-spanning segment; that stretch reads WLTLAVSLPFYVSFLYSWWFL. Residues 278–345 are Cytoplasmic-facing; that stretch reads ESARWLVLTK…DLLRTSTMRT (68 aa). A helical membrane pass occupies residues 346–366; sequence ITICLSAVWFSTSFAYYGLSM. Residues 367-374 lie on the Extracellular side of the membrane; sequence DLQKFGVS. Residues 375–395 traverse the membrane as a helical segment; it reads IYLIQIIFGAVDIPAKIIVTI. Over 396 to 406 the chain is Cytoplasmic; that stretch reads CMSMLGRRPSQ. The helical transmembrane segment at 407–427 threads the bilayer; sequence CGALVLAGIMILINLLVPSDL. The Extracellular portion of the chain corresponds to 428–433; that stretch reads QMLRTS. The helical transmembrane segment at 434-454 threads the bilayer; the sequence is LAVIGKGCLAASFNCCYLYAG. Over 455–465 the chain is Cytoplasmic; the sequence is ELYPTVIRQSG. Residues 466-486 form a helical membrane-spanning segment; sequence MGWVSMMARFGAMVAPMVLLL. Over 487–491 the chain is Extracellular; sequence GDDYP. A helical transmembrane segment spans residues 492–512; that stretch reads WIPGFIYGGAPIVSGIFAFFL. Residues 513–560 lie on the Cytoplasmic side of the membrane; that stretch reads PETLSQPLPDTIQDIDDRGLARTNSKRLPEKLDLAMKDPSCVLLKESV.

It belongs to the major facilitator (TC 2.A.1) superfamily. Organic cation transporter (TC 2.A.1.19) family. Post-translationally, glycosylated. Glycosylation is necessary for proper targeting of the transporter to the plasma membrane.

It is found in the cell membrane. The protein resides in the basolateral cell membrane. Its subcellular location is the basal cell membrane. Its function is as follows. Involved in the renal elimination of endogenous and exogenous organic anions. Functions as organic anion exchanger when the uptake of one molecule of organic anion is coupled with an efflux of one molecule of endogenous dicarboxylic acid (glutarate, ketoglutarate, etc). Mediates the sodium-independent uptake of p-aminohippurate (PAH), 2,3-dimercapto-1-propanesulfonic acid (DMPS), cidofovir, adefovir, 9-(2-phosphonylmethoxyethyl) guanine (PMEG), 9-(2-phosphonylmethoxyethyl) diaminopurine (PMEDAP), ochratoxin (OTA), acyclovir (ACV), 3'-azido-3-'deoxythymidine (AZT), cimetidine (CMD), 2,4-dichloro-phenoxyacetate (2,4-D), hippurate (HA), indoleacetate (IA), indoxyl sulfate (IS) and 3-carboxy-4-methyl-5-propyl-2-furanpropionate (CMPF) and edaravone sulfate. PAH uptake is inhibited by p-chloromercuribenzenesulphonate (PCMBS), diethyl pyrocarbonate (DEPC), indomethacin, sulindac, diclofenac, carprofen, okadaic acid, benzothiazolylcysteine (BTC), S-chlorotrifluoroethylcysteine (CTFC), cysteine S-conjugates S-dichlorovinylcysteine (DCVC), furosemide, steviol, phorbol 12-myristate 13-acetate (PMA), calcium ionophore A23187, benzylpenicillin, bumetamide, losartan, probenecid, phenol red, urate, glutarate and alpha-ketoglutarate. This chain is Solute carrier family 22 member 6 (slc22a6), found in Danio rerio (Zebrafish).